The primary structure comprises 256 residues: ATP synthase peripheral stalk subunit b, mitochondrial (256 aa).

Residues 1 to 42 (MLSRVVLSAAAAAAPSLKNAALLGPGVLQATRIFHTGQPSLA) constitute a mitochondrion transit peptide. K131 is modified (N6-succinyllysine). K139, K154, K162, K221, K233, and K244 each carry N6-acetyllysine.

This sequence belongs to the eukaryotic ATPase B chain family. In terms of assembly, component of the ATP synthase complex composed at least of ATP5F1A/subunit alpha, ATP5F1B/subunit beta, ATP5MC1/subunit c (homooctomer), MT-ATP6/subunit a, MT-ATP8/subunit 8, ATP5ME/subunit e, ATP5MF/subunit f, ATP5MG/subunit g, ATP5MK/subunit k, ATP5MJ/subunit j, ATP5F1C/subunit gamma, ATP5F1D/subunit delta, ATP5F1E/subunit epsilon, ATP5PF/subunit F6, ATP5PB/subunit b, ATP5PD/subunit d, ATP5PO/subunit OSCP. ATP synthase complex consists of a soluble F(1) head domain (subunits alpha(3) and beta(3)) - the catalytic core - and a membrane F(0) domain - the membrane proton channel (subunits c, a, 8, e, f, g, k and j). These two domains are linked by a central stalk (subunits gamma, delta, and epsilon) rotating inside the F1 region and a stationary peripheral stalk (subunits F6, b, d, and OSCP).

It is found in the mitochondrion. The protein resides in the mitochondrion inner membrane. In terms of biological role, subunit b, of the mitochondrial membrane ATP synthase complex (F(1)F(0) ATP synthase or Complex V) that produces ATP from ADP in the presence of a proton gradient across the membrane which is generated by electron transport complexes of the respiratory chain. ATP synthase complex consist of a soluble F(1) head domain - the catalytic core - and a membrane F(1) domain - the membrane proton channel. These two domains are linked by a central stalk rotating inside the F(1) region and a stationary peripheral stalk. During catalysis, ATP synthesis in the catalytic domain of F(1) is coupled via a rotary mechanism of the central stalk subunits to proton translocation. In vivo, can only synthesize ATP although its ATP hydrolase activity can be activated artificially in vitro. Part of the complex F(0) domain. Part of the complex F(0) domain and the peripheric stalk, which acts as a stator to hold the catalytic alpha(3)beta(3) subcomplex and subunit a/ATP6 static relative to the rotary elements. The sequence is that of ATP synthase peripheral stalk subunit b, mitochondrial from Bos taurus (Bovine).